Reading from the N-terminus, the 174-residue chain is 2-C-methyl-D-erythritol 2,4-cyclodiphosphate synthase (174 aa).

Positions 13, 15, and 61 each coordinate a divalent metal cation. 4-CDP-2-C-methyl-D-erythritol 2-phosphate is bound at residue 13–15; that stretch reads DAH. Residues 75-77, 149-152, phenylalanine 156, and arginine 159 each bind 4-CDP-2-C-methyl-D-erythritol 2-phosphate; these read DIG and TTTD.

This sequence belongs to the IspF family. In terms of assembly, homotrimer. Requires a divalent metal cation as cofactor.

The enzyme catalyses 4-CDP-2-C-methyl-D-erythritol 2-phosphate = 2-C-methyl-D-erythritol 2,4-cyclic diphosphate + CMP. It functions in the pathway isoprenoid biosynthesis; isopentenyl diphosphate biosynthesis via DXP pathway; isopentenyl diphosphate from 1-deoxy-D-xylulose 5-phosphate: step 4/6. Functionally, involved in the biosynthesis of isopentenyl diphosphate (IPP) and dimethylallyl diphosphate (DMAPP), two major building blocks of isoprenoid compounds. Catalyzes the conversion of 4-diphosphocytidyl-2-C-methyl-D-erythritol 2-phosphate (CDP-ME2P) to 2-C-methyl-D-erythritol 2,4-cyclodiphosphate (ME-CPP) with a corresponding release of cytidine 5-monophosphate (CMP). This chain is 2-C-methyl-D-erythritol 2,4-cyclodiphosphate synthase, found in Bifidobacterium longum subsp. infantis (strain ATCC 15697 / DSM 20088 / JCM 1222 / NCTC 11817 / S12).